Here is a 528-residue protein sequence, read N- to C-terminus: 3-ketoacyl-CoA synthase 2 (528 aa).

Helical transmembrane passes span 36–56 (LGYH…VGLL) and 78–98 (FHFL…TLYF). An FAE domain is found at 97–388 (YFTTRPRRIF…FFATLVARKV (292 aa)). Active-site residues include C241, H320, H407, H411, and N444.

Belongs to the thiolase-like superfamily. Chalcone/stilbene synthases family. In terms of tissue distribution, expressed in siliques, flowers and stems. In young seedlings, expressed in the central cylinder of primary roots, in emerging lateral roots and in their root cap, but not in aboveground tissues such as hypocotyls, cotyledons and leaves. Expressed in sepals in mature flowers and in the chalaza and micropyle region of developing seeds shortly prior to or just after the detachment from the funiculus. Expressed in roots, flowers, cauline leaves and siliques.

It is found in the membrane. It carries out the reaction a very-long-chain acyl-CoA + malonyl-CoA + H(+) = a very-long-chain 3-oxoacyl-CoA + CO2 + CoA. Its pathway is lipid metabolism; fatty acid biosynthesis. Its activity is regulated as follows. Inhibited by K3 herbicides such as allidochlor, anilofos, cafenstrole and flufenacet. Strongly inhibited by metazachlor. Its function is as follows. Mediates the synthesis of VLCFAs from 22 to 26 carbons in length (e.g. C22, C24, C26). Involved in the elongation of C20 fatty acid suberin precursors. Functionally redundant with KCS20 in the two-carbon elongation of C22 fatty acids that is required for cuticular wax and root suberin biosynthesis. The polypeptide is 3-ketoacyl-CoA synthase 2 (Arabidopsis thaliana (Mouse-ear cress)).